Consider the following 572-residue polypeptide: Golgi apyrase (572 aa).

The Lumenal portion of the chain corresponds to 1 to 470 (MVRKYGIFID…KHWMRLFPNK (470 aa)). Residue E145 is the Proton acceptor of the active site. Residues 471–491 (LFFILSFIFCLFFLFSLVLFG) form a helical membrane-spanning segment. Residues 492-572 (YDPKRRQRFK…RERTPRSPFP (81 aa)) lie on the Cytoplasmic side of the membrane.

It belongs to the GDA1/CD39 NTPase family. Ca(2+) serves as cofactor. Requires Mg(2+) as cofactor. Mn(2+) is required as a cofactor.

The protein resides in the golgi apparatus. It is found in the membrane. The enzyme catalyses a ribonucleoside 5'-triphosphate + 2 H2O = a ribonucleoside 5'-phosphate + 2 phosphate + 2 H(+). Its pathway is protein modification; protein glycosylation. In terms of biological role, catalyzes the hydrolysis of phosphoanhydride bonds of nucleoside tri- and di-phosphates. Required for Golgi glycosylation and cell wall integrity. Involved in N-mannosylation of proteins in Golgi. The chain is Golgi apyrase from Schizosaccharomyces pombe (strain 972 / ATCC 24843) (Fission yeast).